The chain runs to 252 residues: Proteasome subunit alpha type-3 (252 aa).

It belongs to the peptidase T1A family. In terms of assembly, the 26S proteasome consists of a 20S proteasome core and two 19S regulatory subunits. The 20S proteasome core is composed of 28 subunits that are arranged in four stacked rings, resulting in a barrel-shaped structure. The two end rings are each formed by seven alpha subunits, and the two central rings are each formed by seven beta subunits. The catalytic chamber with the active sites is on the inside of the barrel.

It is found in the cytoplasm. It localises to the nucleus. Functionally, the proteasome is a multicatalytic proteinase complex which is characterized by its ability to cleave peptides with Arg, Phe, Tyr, Leu, and Glu adjacent to the leaving group at neutral or slightly basic pH. The proteasome has an ATP-dependent proteolytic activity. This chain is Proteasome subunit alpha type-3, found in Acanthamoeba castellanii (Amoeba).